A 282-amino-acid polypeptide reads, in one-letter code: Putative phosphoenolpyruvate synthase regulatory protein (282 aa).

161-168 contacts ADP; that stretch reads GVSRSGKT.

It belongs to the pyruvate, phosphate/water dikinase regulatory protein family. PSRP subfamily.

The catalysed reaction is [pyruvate, water dikinase] + ADP = [pyruvate, water dikinase]-phosphate + AMP + H(+). It carries out the reaction [pyruvate, water dikinase]-phosphate + phosphate + H(+) = [pyruvate, water dikinase] + diphosphate. In terms of biological role, bifunctional serine/threonine kinase and phosphorylase involved in the regulation of the phosphoenolpyruvate synthase (PEPS) by catalyzing its phosphorylation/dephosphorylation. The chain is Putative phosphoenolpyruvate synthase regulatory protein from Janthinobacterium sp. (strain Marseille) (Minibacterium massiliensis).